The following is a 363-amino-acid chain: G-protein coupled receptor 6 (363 aa).

Residues 1–75 lie on the Extracellular side of the membrane; it reads MNASAAALNE…SGLLLSAVNP (75 aa). N-linked (GlcNAc...) asparagine glycans are attached at residues asparagine 2 and asparagine 9. The segment at 29–48 is disordered; it reads GAPDTGEWGPPAASAALGGG. A glycan (N-linked (GlcNAc...) asparagine) is linked at asparagine 52. Residues 76–95 form a helical membrane-spanning segment; that stretch reads WDVLLCVSGTVIAGENALVV. Over 96 to 107 the chain is Cytoplasmic; sequence ALIASTPALRTP. Residues 108 to 131 traverse the membrane as a helical segment; the sequence is MFVLVGSLATADLLAGCGLILHFV. The Extracellular portion of the chain corresponds to 132-143; the sequence is FQYVVPSETVSL. The chain crosses the membrane as a helical span at residues 144–165; that stretch reads LMVGFLVASFAASVSSLLAITV. Residues 166–186 are Cytoplasmic-facing; the sequence is DRYLSLYNALTYYSRRTLLGV. Residues 187-206 form a helical membrane-spanning segment; sequence HLLLAATWTVSLGLGLLPVL. The Extracellular segment spans residues 207–231; sequence GWNCLADRTSCSVVRPLTRSHVALL. Residues 232-250 traverse the membrane as a helical segment; the sequence is STSFFVVFGIMLHLYVRIC. Topologically, residues 251 to 278 are cytoplasmic; sequence QVVWRHAHQIALQQHCLAPPHLAATRKG. Residues 279–305 form a helical membrane-spanning segment; it reads VGTLAVVLGTFGASWLPFAIYCVVGSQ. The Extracellular portion of the chain corresponds to 306–310; the sequence is EDPAI. The helical transmembrane segment at 311–332 threads the bilayer; the sequence is YTYATLLPATYNSMINPIIYAF. At 333-363 the chain is on the cytoplasmic side; the sequence is RNQEIQRALWLLFCGCFQSKVPFRSRSPSEV. A lipid anchor (S-palmitoyl cysteine) is attached at cysteine 346. 3 positions are modified to phosphoserine: serine 357, serine 359, and serine 361.

This sequence belongs to the G-protein coupled receptor 1 family. Mainly expressed in the brain. Selectively expressed in striatopallidal neurons in the striatum.

It is found in the cell membrane. Orphan receptor with constitutive G(s) signaling activity that activate cyclic AMP. Promotes neurite outgrowth and blocks myelin inhibition in neurons. The sequence is that of G-protein coupled receptor 6 (Gpr6) from Mus musculus (Mouse).